The chain runs to 276 residues: MQYILKLKYYLYNITWKLVFICVMLVLLIVGIHKNIKWVCDYYSGPLSYIIVTGNRFFTTNDDINYIILKSGVLGTFITQDVNIIQKQIKQMPWIQKVSVRKQWPNTLKINLIEYIPIAYWNNEFISTTGVVFSVSECLYNEYSSFVRKMYQEIPILYGPTGKDQEVLNNYLRFSAILKSSNFQIKSVKTDTCYTWQLVLDNNVCLKLGCVNLIERLHYFIKVYPFLVKEMDEKNKYIDYVDLRYNSGCSVRWIHNMIDPVFHAINNVSKGSHDYD.

The Cytoplasmic segment spans residues 1-11 (MQYILKLKYYL). Residues 12–32 (YNITWKLVFICVMLVLLIVGI) traverse the membrane as a helical segment. Residues 33 to 276 (HKNIKWVCDY…NVSKGSHDYD (244 aa)) lie on the Periplasmic side of the membrane. The 71-residue stretch at 45–115 (GPLSYIIVTG…NTLKINLIEY (71 aa)) folds into the POTRA domain.

It belongs to the FtsQ/DivIB family. FtsQ subfamily. In terms of assembly, part of a complex composed of FtsB, FtsL and FtsQ.

It is found in the cell inner membrane. In terms of biological role, essential cell division protein. May link together the upstream cell division proteins, which are predominantly cytoplasmic, with the downstream cell division proteins, which are predominantly periplasmic. May control correct divisome assembly. This is Cell division protein FtsQ from Blochmanniella floridana.